The sequence spans 182 residues: Large ribosomal subunit protein uL5m (182 aa).

Belongs to the universal ribosomal protein uL5 family.

The protein localises to the mitochondrion. In Reclinomonas americana, this protein is Large ribosomal subunit protein uL5m (RPL5).